The following is a 383-amino-acid chain: UDP-N-acetylglucosamine--N-acetylmuramyl-(pentapeptide) pyrophosphoryl-undecaprenol N-acetylglucosamine transferase (383 aa).

UDP-N-acetyl-alpha-D-glucosamine is bound by residues 10 to 12, asparagine 124, arginine 165, serine 190, isoleucine 245, and glutamine 290; that span reads TGG. The segment at 364-383 is disordered; that stretch reads PFGQAREPGQKPARPPDLAS.

This sequence belongs to the glycosyltransferase 28 family. MurG subfamily.

Its subcellular location is the cell inner membrane. The catalysed reaction is di-trans,octa-cis-undecaprenyl diphospho-N-acetyl-alpha-D-muramoyl-L-alanyl-D-glutamyl-meso-2,6-diaminopimeloyl-D-alanyl-D-alanine + UDP-N-acetyl-alpha-D-glucosamine = di-trans,octa-cis-undecaprenyl diphospho-[N-acetyl-alpha-D-glucosaminyl-(1-&gt;4)]-N-acetyl-alpha-D-muramoyl-L-alanyl-D-glutamyl-meso-2,6-diaminopimeloyl-D-alanyl-D-alanine + UDP + H(+). It participates in cell wall biogenesis; peptidoglycan biosynthesis. Its function is as follows. Cell wall formation. Catalyzes the transfer of a GlcNAc subunit on undecaprenyl-pyrophosphoryl-MurNAc-pentapeptide (lipid intermediate I) to form undecaprenyl-pyrophosphoryl-MurNAc-(pentapeptide)GlcNAc (lipid intermediate II). This is UDP-N-acetylglucosamine--N-acetylmuramyl-(pentapeptide) pyrophosphoryl-undecaprenol N-acetylglucosamine transferase from Anaeromyxobacter dehalogenans (strain 2CP-C).